A 63-amino-acid chain; its full sequence is Metallothionein-like protein type 3 (63 aa).

The protein belongs to the metallothionein superfamily. Type 15 family.

In terms of biological role, metallothioneins have a high content of cysteine residues that bind various heavy metals. The chain is Metallothionein-like protein type 3 from Actinidia deliciosa (Kiwi).